A 145-amino-acid chain; its full sequence is UPF0179 protein Msm_0285 (145 aa).

The protein belongs to the UPF0179 family.

This Methanobrevibacter smithii (strain ATCC 35061 / DSM 861 / OCM 144 / PS) protein is UPF0179 protein Msm_0285.